The primary structure comprises 592 residues: E3 ubiquitin-protein ligase RNF180 (592 aa).

The Cytoplasmic portion of the chain corresponds to methionine 1–aspartate 564. Serine 230 bears the Phosphoserine mark. The segment at cysteine 432–arginine 474 adopts an RING-type zinc-finger fold. A helical transmembrane segment spans residues methionine 565–leucine 585. Residues cysteine 586 to phenylalanine 592 lie on the Extracellular side of the membrane.

Interacts with ZIC2.

It is found in the endoplasmic reticulum membrane. The protein localises to the nucleus envelope. The catalysed reaction is S-ubiquitinyl-[E2 ubiquitin-conjugating enzyme]-L-cysteine + [acceptor protein]-L-lysine = [E2 ubiquitin-conjugating enzyme]-L-cysteine + N(6)-ubiquitinyl-[acceptor protein]-L-lysine.. Its pathway is protein modification; protein ubiquitination. E3 ubiquitin-protein ligase which promotes polyubiquitination and degradation by the proteasome pathway of ZIC2. The sequence is that of E3 ubiquitin-protein ligase RNF180 (RNF180) from Pongo abelii (Sumatran orangutan).